A 392-amino-acid chain; its full sequence is Phosphoglycerate kinase (392 aa).

Residues 21–23 (DLN), arginine 36, 59–62 (HLGR), arginine 114, and arginine 147 contribute to the substrate site. Residues lysine 198, glutamate 320, and 346–349 (GGDT) contribute to the ATP site.

The protein belongs to the phosphoglycerate kinase family. As to quaternary structure, monomer.

It localises to the cytoplasm. The catalysed reaction is (2R)-3-phosphoglycerate + ATP = (2R)-3-phospho-glyceroyl phosphate + ADP. Its pathway is carbohydrate degradation; glycolysis; pyruvate from D-glyceraldehyde 3-phosphate: step 2/5. The polypeptide is Phosphoglycerate kinase (Nitrosomonas europaea (strain ATCC 19718 / CIP 103999 / KCTC 2705 / NBRC 14298)).